The sequence spans 89 residues: MEKDKSLITFLEMLDTAMAQRMLADLSDHERRSPQLYNAINKLLDRHKFQIGKLQPDVHILGGLAGALEEYKEKVGDNGLTDDDIYTLQ.

Residues 1-48 form a helix-turn-helix (HTH) region; the sequence is MEKDKSLITFLEMLDTAMAQRMLADLSDHERRSPQLYNAINKLLDRHK.

Belongs to the terminase small subunit family. As to quaternary structure, homooctamer. Interacts with the terminase large subunit gp19; the active complex is probably heterooligomeric.

In terms of biological role, plays a role in packaging a single copy of genome into the prohead. The terminase is composed of two subunits (a large and a small) and the small subunit recognizes a specific sequence in the viral DNA. Once the DNA is packaged, the terminase detaches from the connector and the tail replaces it to finish maturation of the virion. Packaging initiates by TerS recognizing the packaging sequence in the viral DNA. The nuclease activity of TerL cuts the viral DNA and the terminase-DNA complex binds to the portal of a procapsid shell. DNA is translocated into the capsid, powered by the packaging ATPase in TerL, which continues until the next site is encountered at which point the motor stops and again cuts the DNA to release the nucleocapsid filled with a unit-length genome ('unit length' packaging). Direct short terminal repeats at each end of the genome are duplicated in concert with packaging. The sequence is that of Terminase, small subunit gp18 from Escherichia coli (Bacteriophage T7).